The following is a 292-amino-acid chain: Polyisoprenoid diphosphate/phosphate phosphohydrolase PLPP6 (292 aa).

Disordered stretches follow at residues 1–34 and 66–86; these read MPSP…SGGG and GSFP…PPED. The Cytoplasmic portion of the chain corresponds to 1–131; sequence MPSPRRTIEG…SAWGSVRPLM (131 aa). Over residues 10–25 the composition is skewed to low complexity; sequence GRPLGSSGGSSVPGSP. Phosphoserine is present on residues Ser24 and Ser67. Residues 69–79 show a composition bias toward low complexity; that stretch reads PLAASGPAQAA. The chain crosses the membrane as a helical span at residues 132–152; it reads KLLEISGHGIPWLLGTLYCLL. Topologically, residues 153 to 161 are lumenal; it reads RSDSWAGRE. A helical membrane pass occupies residues 162 to 182; the sequence is VLMNLLFALLLDLLLVAVIKG. The interval 181–189 is phosphatase sequence motif I; it reads KGLVRRRRP. The Cytoplasmic portion of the chain corresponds to 183-225; sequence LVRRRRPAHNQKDMFFTLSVDRYSFPSGHATRAALVSRFILNH. Positions 208–211 are phosphatase sequence motif II; sequence PSGH. The Proton donors role is filled by His211. A helical transmembrane segment spans residues 226-246; it reads LVLAIPLRVLVVLWAFVLGLS. The phosphatase sequence motif III stretch occupies residues 246 to 257; the sequence is SRVMLGRHNVTD. Topologically, residues 247 to 257 are lumenal; it reads RVMLGRHNVTD. His253 serves as the catalytic Nucleophile. The helical transmembrane segment at 258–278 threads the bilayer; the sequence is VAFGFFLGYMQYSIVDYCWLS. Over 279–292 the chain is Cytoplasmic; it reads PHNVPVLFVLWNQQ.

Belongs to the PA-phosphatase related phosphoesterase family. In terms of processing, phosphorylation by PKC activates the phosphatase activity towards presqualene diphosphate.

Its subcellular location is the endoplasmic reticulum membrane. The protein resides in the nucleus envelope. It localises to the nucleus inner membrane. It carries out the reaction presqualene diphosphate + H2O = presqualene phosphate + phosphate + H(+). The catalysed reaction is presqualene phosphate + H2O = presqualene alcohol + phosphate. The enzyme catalyses (2E,6E)-farnesyl diphosphate + H2O = (2E,6E)-farnesyl phosphate + phosphate + H(+). It catalyses the reaction (2E,6E)-farnesyl phosphate + H2O = (2E,6E)-farnesol + phosphate. It carries out the reaction (2E,6E,10E)-geranylgeranyl diphosphate + H2O = (2E,6E,10E)-geranylgeranyl phosphate + phosphate + H(+). The catalysed reaction is (2E,6E,10E)-geranylgeranyl phosphate + H2O = (2E,6E,10E)-geranylgeraniol + phosphate. The enzyme catalyses (2E)-geranyl diphosphate + H2O = (2E)-geranyl phosphate + phosphate + H(+). It catalyses the reaction (2E)-geranyl phosphate + H2O = (2E)-geraniol + phosphate. It carries out the reaction 1,2-dihexadecanoyl-sn-glycero-3-phosphate + H2O = 1,2-dihexadecanoyl-sn-glycerol + phosphate. Magnesium-independent polyisoprenoid diphosphatase that catalyzes the sequential dephosphorylation of presqualene, farnesyl, geranyl and geranylgeranyl diphosphates. Functions in the innate immune response through the dephosphorylation of presqualene diphosphate which acts as a potent inhibitor of the signaling pathways contributing to polymorphonuclear neutrophils activation. May regulate the biosynthesis of cholesterol and related sterols by dephosphorylating presqualene and farnesyl diphosphate, two key intermediates in this biosynthetic pathway. May also play a role in protein prenylation by acting on farnesyl diphosphate and its derivative geranylgeranyl diphosphate, two precursors for the addition of isoprenoid anchors to membrane proteins. Has a lower activity towards phosphatidic acid (PA), but through phosphatidic acid dephosphorylation may participate in the biosynthesis of phospholipids and triacylglycerols. May also act on ceramide-1-P, lysophosphatidic acid (LPA) and sphing-4-enine 1-phosphate/sphingosine-1-phosphate. The protein is Polyisoprenoid diphosphate/phosphate phosphohydrolase PLPP6 of Mus musculus (Mouse).